The sequence spans 252 residues: Adenosylcobinamide-GDP ribazoletransferase (252 aa).

7 helical membrane-spanning segments follow: residues 36–56 (LVPIVGLIIGGIMGVTYMLLV), 59–79 (FFYKISAVLVLIEYIFLTGGI), 109–129 (VGTNAVLAVISVIILNYVILT), 133–153 (PAYMVKVIILFPVAGRLGSIV), 170–192 (SFIDYCTLKELAIGIILYAVIFL), 199–218 (GYIIMIFPILTAVILIKYFT), and 228–248 (ILGAVCELNQTFYLMTVYAVL).

This sequence belongs to the CobS family. Requires Mg(2+) as cofactor.

The protein localises to the cell membrane. The catalysed reaction is alpha-ribazole + adenosylcob(III)inamide-GDP = adenosylcob(III)alamin + GMP + H(+). It catalyses the reaction alpha-ribazole 5'-phosphate + adenosylcob(III)inamide-GDP = adenosylcob(III)alamin 5'-phosphate + GMP + H(+). Its pathway is cofactor biosynthesis; adenosylcobalamin biosynthesis; adenosylcobalamin from cob(II)yrinate a,c-diamide: step 7/7. Its function is as follows. Joins adenosylcobinamide-GDP and alpha-ribazole to generate adenosylcobalamin (Ado-cobalamin). Also synthesizes adenosylcobalamin 5'-phosphate from adenosylcobinamide-GDP and alpha-ribazole 5'-phosphate. The sequence is that of Adenosylcobinamide-GDP ribazoletransferase from Clostridium acetobutylicum (strain ATCC 824 / DSM 792 / JCM 1419 / IAM 19013 / LMG 5710 / NBRC 13948 / NRRL B-527 / VKM B-1787 / 2291 / W).